Consider the following 352-residue polypeptide: Carbohydrate sulfotransferase 11 (352 aa).

At 1–16 (MKQTILDLMRMSRICR) the chain is on the cytoplasmic side. A helical; Signal-anchor for type II membrane protein membrane pass occupies residues 17–37 (MVLATCLGSFILVIFYFQSMF). Over 38 to 352 (QPVMRRNPFA…YSIPSYLKLQ (315 aa)) the chain is Lumenal. 3'-phosphoadenylyl sulfate contacts are provided by residues 124 to 130 (PKVACTN) and 186 to 194 (REPFERLVS). N-linked (GlcNAc...) asparagine glycosylation is found at Asn205, Asn223, Asn321, and Asn342.

It belongs to the sulfotransferase 2 family.

The protein resides in the golgi apparatus membrane. The enzyme catalyses chondroitin beta-D-glucuronate + n 3'-phosphoadenylyl sulfate = chondroitin 4'-sulfate + n adenosine 3',5'-bisphosphate + n H(+). In terms of biological role, catalyzes the transfer of sulfate to position 4 of the N-acetylgalactosamine (GalNAc) residue of chondroitin. This is Carbohydrate sulfotransferase 11 (chst11) from Danio rerio (Zebrafish).